Consider the following 101-residue polypeptide: Nucleoid-associated protein Acid345_1974 (101 aa).

It belongs to the YbaB/EbfC family. Homodimer.

It is found in the cytoplasm. The protein resides in the nucleoid. In terms of biological role, binds to DNA and alters its conformation. May be involved in regulation of gene expression, nucleoid organization and DNA protection. In Koribacter versatilis (strain Ellin345), this protein is Nucleoid-associated protein Acid345_1974.